Consider the following 161-residue polypeptide: Arachidonate 5-lipoxygenase-activating protein (161 aa).

Residues 1-8 are Lumenal-facing; the sequence is MDQEAVGN. Residues 9–30 traverse the membrane as a helical segment; sequence VVLLAIVTLISVVQNAFFAHKV. Over 31-52 the chain is Cytoplasmic; that stretch reads ELESKAQSGRSFQRTGTLAFER. The chain crosses the membrane as a helical span at residues 53-77; it reads VYTANQNCVDAYPTFLVVLWTAGLL. The Lumenal segment spans residues 78-80; sequence CSQ. The chain crosses the membrane as a helical span at residues 81-102; the sequence is VPAAFAGLMYLFVRQKYFVGYL. Residues 103–107 are Cytoplasmic-facing; that stretch reads GERTQ. An intramembrane segment occupies 108–115; it reads STPGYIFG. A helical membrane pass occupies residues 116-128; sequence KRIILFLFLMSLA. The Lumenal segment spans residues 129-161; it reads GILNHYLIFFFGSDFENYIRTITTTISPLLLIP.

It belongs to the MAPEG family. In terms of assembly, homotrimer. Interacts with LTC4S and ALOX5.

It localises to the nucleus membrane. The protein resides in the endoplasmic reticulum membrane. Its function is as follows. Required for leukotriene biosynthesis by ALOX5 (5-lipoxygenase). Anchors ALOX5 to the membrane. Binds arachidonic acid, and could play an essential role in the transfer of arachidonic acid to ALOX5. Binds to MK-886, a compound that blocks the biosynthesis of leukotrienes. This is Arachidonate 5-lipoxygenase-activating protein (Alox5ap) from Rattus norvegicus (Rat).